Consider the following 212-residue polypeptide: Inner membrane-spanning protein YciB (212 aa).

The next 5 membrane-spanning stretches (helical) occupy residues 49–69 (APVL…VLYL), 78–98 (TMLW…IWFH), 105–125 (WKPS…PIVA), 150–170 (LAWA…AYNF), and 178–198 (FKAF…GLYM).

Belongs to the YciB family.

The protein localises to the cell inner membrane. Functionally, plays a role in cell envelope biogenesis, maintenance of cell envelope integrity and membrane homeostasis. This chain is Inner membrane-spanning protein YciB, found in Leptothrix cholodnii (strain ATCC 51168 / LMG 8142 / SP-6) (Leptothrix discophora (strain SP-6)).